The chain runs to 460 residues: 7-cyano-7-deazaguanine synthase 2 (460 aa).

C2 serves as the catalytic For GATase activity. One can recognise a Glutamine amidotransferase type-2 domain in the interval 2-225; the sequence is CSVTGVLIIK…PYSIVEVNDN (224 aa). 245-255 contacts ATP; sequence ASGGLDSTVAA. Residues C426, C434, C437, and C440 each coordinate Zn(2+).

The protein belongs to the QueC family. The cofactor is Zn(2+).

It catalyses the reaction 7-carboxy-7-deazaguanine + NH4(+) + ATP = 7-cyano-7-deazaguanine + ADP + phosphate + H2O + H(+). The protein operates within purine metabolism; 7-cyano-7-deazaguanine biosynthesis. In terms of biological role, catalyzes the ATP-dependent conversion of 7-carboxy-7-deazaguanine (CDG) to 7-cyano-7-deazaguanine (preQ(0)). This chain is 7-cyano-7-deazaguanine synthase 2 (queC2), found in Sulfurisphaera tokodaii (strain DSM 16993 / JCM 10545 / NBRC 100140 / 7) (Sulfolobus tokodaii).